Consider the following 503-residue polypeptide: MSARGQDIVSIIKEQIKEFGAPVSMTSVGSVIEVGDGIARIHGLSNAKYNELLEFPGGVMGIALNLEEDSVAAVILGDDANIKEGDEVKATGRISEITVGKGMIGRVVDPLGRPLDGKGPIKAETVRPLERIAPNVVDRKSVNTPVQTGIKAIDAMIPIGRGQRELIIGDRSTGKTAIALDTIINQKGGDLVCIYVAIGQKASKVARTVALLEQYGAMEHTIVVAANSSDAVALQYLAPYAGCAIGEEFMEQGQDALVVYDDLTKHAWAYRQLSLLLRRPPGREAYPGDVFYLHSRLLERAARLNDKLGGGSLTALPIIETQAGDVSAYVPTNVISITDGQIYLEPDMFNSGIRPAVNVGISVSRVGSSAQTKAMKKVASKLKMDMGQYRELAAFAQFGTSELDKATRMQLERGQRITEVLKQGQYQPVPMANQVAILYAALNGYLDSVEVAKVRDFESGLYRFLEANFASVLNNITKENAISAETETALKTALDDYKKGLVV.

An ATP-binding site is contributed by 169 to 176 (GDRSTGKT).

This sequence belongs to the ATPase alpha/beta chains family. In terms of assembly, F-type ATPases have 2 components, CF(1) - the catalytic core - and CF(0) - the membrane proton channel. CF(1) has five subunits: alpha(3), beta(3), gamma(1), delta(1), epsilon(1). CF(0) has three main subunits: a(1), b(2) and c(9-12). The alpha and beta chains form an alternating ring which encloses part of the gamma chain. CF(1) is attached to CF(0) by a central stalk formed by the gamma and epsilon chains, while a peripheral stalk is formed by the delta and b chains.

It localises to the cell membrane. The catalysed reaction is ATP + H2O + 4 H(+)(in) = ADP + phosphate + 5 H(+)(out). In terms of biological role, produces ATP from ADP in the presence of a proton gradient across the membrane. The alpha chain is a regulatory subunit. The protein is ATP synthase subunit alpha of Dehalococcoides mccartyi (strain ATCC BAA-2266 / KCTC 15142 / 195) (Dehalococcoides ethenogenes (strain 195)).